Here is a 36-residue protein sequence, read N- to C-terminus: Photosystem I reaction center subunit VIII (36 aa).

A helical membrane pass occupies residues 9 to 29 (ISVPLVGLVFPAITMVLSFIY).

The protein belongs to the PsaI family.

Its subcellular location is the plastid. The protein localises to the chloroplast thylakoid membrane. Functionally, may help in the organization of the PsaL subunit. The chain is Photosystem I reaction center subunit VIII from Huperzia lucidula (Shining clubmoss).